A 210-amino-acid chain; its full sequence is dITP/XTP pyrophosphatase (210 aa).

16-21 (SNNKGK) is a binding site for substrate. D79 (proton acceptor) is an active-site residue. D79 contributes to the Mg(2+) binding site. Substrate-binding positions include S80, 166–169 (FGYD), K189, and 194–195 (HR).

It belongs to the HAM1 NTPase family. Homodimer. Mg(2+) serves as cofactor.

The catalysed reaction is XTP + H2O = XMP + diphosphate + H(+). The enzyme catalyses dITP + H2O = dIMP + diphosphate + H(+). It carries out the reaction ITP + H2O = IMP + diphosphate + H(+). Pyrophosphatase that catalyzes the hydrolysis of nucleoside triphosphates to their monophosphate derivatives, with a high preference for the non-canonical purine nucleotides XTP (xanthosine triphosphate), dITP (deoxyinosine triphosphate) and ITP. Seems to function as a house-cleaning enzyme that removes non-canonical purine nucleotides from the nucleotide pool, thus preventing their incorporation into DNA/RNA and avoiding chromosomal lesions. This is dITP/XTP pyrophosphatase from Acinetobacter baylyi (strain ATCC 33305 / BD413 / ADP1).